The following is a 298-amino-acid chain: Cytochrome c oxidase subunit 2 (298 aa).

Residues 1-29 (MMAIATKRRGVAAVMSLGVATMTAVPALA) form the signal peptide. Glutamine 30 carries the pyrrolidone carboxylic acid modification. Residues 30-55 (QDVLGDLPVIGKPVNGGMNFQPASSP) are Periplasmic-facing. Residues 56 to 88 (LAHDQQWLDHFVLYIITAVTIFVCLLLLICIVR) traverse the membrane as a helical segment. Residues 89-103 (FNRRANPVPARFTHN) are Cytoplasmic-facing. The helical transmembrane segment at 104 to 134 (TPIEVIWTLVPVLILVAIGAFSLPILFRSQE) threads the bilayer. Over 135-280 (MPNDPDLVIK…WLAGAKEEFA (146 aa)) the chain is Periplasmic. Positions 210, 245, 247, 249, 253, and 256 each coordinate Cu cation. Residues 281 to 298 (ADASDYLPASPVKLASAE) constitute a propeptide, C-terminal propeptide.

Belongs to the cytochrome c oxidase subunit 2 family. Requires binuclear copper center (CuA) as cofactor.

The protein localises to the cell inner membrane. It carries out the reaction 4 Fe(II)-[cytochrome c] + O2 + 8 H(+)(in) = 4 Fe(III)-[cytochrome c] + 2 H2O + 4 H(+)(out). Subunits I and II form the functional core of the enzyme complex. Electrons originating in cytochrome c are transferred via heme a and Cu(A) to the binuclear center formed by heme a3 and Cu(B). The chain is Cytochrome c oxidase subunit 2 (ctaC) from Paracoccus denitrificans.